A 365-amino-acid chain; its full sequence is tRNA N6-adenosine threonylcarbamoyltransferase (365 aa).

Fe cation contacts are provided by His119 and His123. Substrate-binding positions include 141-145, Asp174, Gly187, and Asn289; that span reads LVSGG. Fe cation is bound at residue Asp317. The disordered stretch occupies residues 342–365; that stretch reads ARPRWPLDSKSPAMLGSGKKGAKA.

This sequence belongs to the KAE1 / TsaD family. The cofactor is Fe(2+).

The protein resides in the cytoplasm. It carries out the reaction L-threonylcarbamoyladenylate + adenosine(37) in tRNA = N(6)-L-threonylcarbamoyladenosine(37) in tRNA + AMP + H(+). In terms of biological role, required for the formation of a threonylcarbamoyl group on adenosine at position 37 (t(6)A37) in tRNAs that read codons beginning with adenine. Is involved in the transfer of the threonylcarbamoyl moiety of threonylcarbamoyl-AMP (TC-AMP) to the N6 group of A37, together with TsaE and TsaB. TsaD likely plays a direct catalytic role in this reaction. This Roseobacter denitrificans (strain ATCC 33942 / OCh 114) (Erythrobacter sp. (strain OCh 114)) protein is tRNA N6-adenosine threonylcarbamoyltransferase.